The primary structure comprises 188 residues: MKIGVLGVQGDVREHVEALHKLGVETLIVKLPEQLDMVDGLILPGGESTTMIRILKEMDMDEKLVERINNGLPVFATCAGVILLAKRIKNYSQEKLGVLDITVERNAYGRQVESFETFVEIPAVGKDPFRAIFIRAPRIVETGKNVEILATYDYDPVLVKEGNILACTFHPELTDDLRLHRYFLEMVK.

46 to 48 (GES) serves as a coordination point for L-glutamine. The active-site Nucleophile is C78. Residues R105 and 134–135 (IR) each bind L-glutamine. Active-site charge relay system residues include H170 and E172.

This sequence belongs to the glutaminase PdxT/SNO family. As to quaternary structure, in the presence of PdxS, forms a dodecamer of heterodimers. Only shows activity in the heterodimer.

It carries out the reaction aldehydo-D-ribose 5-phosphate + D-glyceraldehyde 3-phosphate + L-glutamine = pyridoxal 5'-phosphate + L-glutamate + phosphate + 3 H2O + H(+). The catalysed reaction is L-glutamine + H2O = L-glutamate + NH4(+). Its pathway is cofactor biosynthesis; pyridoxal 5'-phosphate biosynthesis. Catalyzes the hydrolysis of glutamine to glutamate and ammonia as part of the biosynthesis of pyridoxal 5'-phosphate. The resulting ammonia molecule is channeled to the active site of PdxS. The polypeptide is Pyridoxal 5'-phosphate synthase subunit PdxT (Thermotoga maritima (strain ATCC 43589 / DSM 3109 / JCM 10099 / NBRC 100826 / MSB8)).